Reading from the N-terminus, the 210-residue chain is Glycerol-3-phosphate acyltransferase (210 aa).

A run of 5 helical transmembrane segments spans residues 1 to 21 (MLLS…FPAG), 53 to 73 (GPAL…VVAA), 87 to 107 (IAWL…LPVW), 122 to 142 (VLLA…LLLL), and 147 to 167 (IVSL…LILP).

This sequence belongs to the PlsY family. In terms of assembly, probably interacts with PlsX.

The protein resides in the cell inner membrane. It carries out the reaction an acyl phosphate + sn-glycerol 3-phosphate = a 1-acyl-sn-glycero-3-phosphate + phosphate. It functions in the pathway lipid metabolism; phospholipid metabolism. Functionally, catalyzes the transfer of an acyl group from acyl-phosphate (acyl-PO(4)) to glycerol-3-phosphate (G3P) to form lysophosphatidic acid (LPA). This enzyme utilizes acyl-phosphate as fatty acyl donor, but not acyl-CoA or acyl-ACP. The chain is Glycerol-3-phosphate acyltransferase from Synechococcus elongatus (strain ATCC 33912 / PCC 7942 / FACHB-805) (Anacystis nidulans R2).